Consider the following 1370-residue polypeptide: DNA-directed RNA polymerase subunit beta (1370 aa).

This sequence belongs to the RNA polymerase beta chain family. In terms of assembly, the RNAP catalytic core consists of 2 alpha, 1 beta, 1 beta' and 1 omega subunit. When a sigma factor is associated with the core the holoenzyme is formed, which can initiate transcription.

The catalysed reaction is RNA(n) + a ribonucleoside 5'-triphosphate = RNA(n+1) + diphosphate. In terms of biological role, DNA-dependent RNA polymerase catalyzes the transcription of DNA into RNA using the four ribonucleoside triphosphates as substrates. The sequence is that of DNA-directed RNA polymerase subunit beta from Bordetella petrii (strain ATCC BAA-461 / DSM 12804 / CCUG 43448).